Reading from the N-terminus, the 61-residue chain is Large ribosomal subunit protein uL30 (61 aa).

It belongs to the universal ribosomal protein uL30 family. As to quaternary structure, part of the 50S ribosomal subunit.

This chain is Large ribosomal subunit protein uL30, found in Shewanella piezotolerans (strain WP3 / JCM 13877).